Consider the following 259-residue polypeptide: Leucine-rich repeat-containing protein 3B (259 aa).

An N-terminal signal peptide occupies residues 1–33; sequence MNLVDLWLSRSLSMCLLLQSFVLMILCFHSASM. The 31-residue stretch at 34 to 64 folds into the LRRNT domain; the sequence is CPKGCLCSSSGGLNVTCSNANLKEIPRDLPP. N47 carries N-linked (GlcNAc...) asparagine glycosylation. 3 LRR repeats span residues 65 to 86, 89 to 110, and 114 to 135; these read ETVL…IFKD, QLRV…AFKG, and TLQT…AFNN. An N-linked (GlcNAc...) asparagine glycan is attached at N94. The LRRCT domain occupies 145-197; it reads NPWHCDCTLQQVLRSMASNHETAHNVICKTSVLDEHAGRPFLNAANDADLCNL. Residues 205–225 traverse the membrane as a helical segment; it reads AMLVTMFGWFTMVISYVVYYV.

This sequence belongs to the LRRC3 family.

It localises to the membrane. This Mus musculus (Mouse) protein is Leucine-rich repeat-containing protein 3B (Lrrc3b).